Reading from the N-terminus, the 217-residue chain is UPF0319 protein HSM_0266 (217 aa).

Residues 1 to 21 form the signal peptide; that stretch reads MKFSFAALASAMLLTSTAAFA.

This sequence belongs to the UPF0319 family.

This is UPF0319 protein HSM_0266 from Histophilus somni (strain 2336) (Haemophilus somnus).